Consider the following 474-residue polypeptide: Probable cytosol aminopeptidase (474 aa).

Residues lysine 237 and aspartate 242 each contribute to the Mn(2+) site. Residue lysine 249 is part of the active site. Mn(2+) contacts are provided by aspartate 260, aspartate 319, and glutamate 321. Arginine 323 is a catalytic residue.

The protein belongs to the peptidase M17 family. Mn(2+) serves as cofactor.

Its subcellular location is the cytoplasm. The enzyme catalyses Release of an N-terminal amino acid, Xaa-|-Yaa-, in which Xaa is preferably Leu, but may be other amino acids including Pro although not Arg or Lys, and Yaa may be Pro. Amino acid amides and methyl esters are also readily hydrolyzed, but rates on arylamides are exceedingly low.. It catalyses the reaction Release of an N-terminal amino acid, preferentially leucine, but not glutamic or aspartic acids.. Its function is as follows. Presumably involved in the processing and regular turnover of intracellular proteins. Catalyzes the removal of unsubstituted N-terminal amino acids from various peptides. This chain is Probable cytosol aminopeptidase, found in Helicobacter hepaticus (strain ATCC 51449 / 3B1).